The sequence spans 762 residues: MSKKPPNRPGITFEIGARLEALDYLQKWYPSRIEKIDYEEGKMLVHFERWSHRYDEWIYWDSNRLRPLERPALRKEGLKDDEEFVDFKPGEEVLARWTDCRYYPAKIEAINKEGTFTVQFYDGVIRCLKRMHIKSMPEDAKGQAREREQIAPELRLVTEVEPKEDWIALVKAAAAAAAKNKAGTKPRTSANSNKDKEERKWLKVPSKKEETSTSTIMQEVQKKEEEPTSSDTFVGFPIVDVPKMAFVQAESTLSHKRKSNLGNSFQAKRARLNKITGLLASKAVVADGAEKKEGNKETAPVLEQEISPKPQIQKKNEADISSSANIQKPALLSSTLSSGKARSKKCKQESGDSSGCIKPPKSPLCPELIQVEDLTLVSQLPSSVINKTSPSQPLNSPRSYKHSQRRRRSQRLATCSLPDDSVEKVSSPSSVTDGKVFSISAQNQQSKLEVPDVAHMSLEKRGPCLPLDLSRSSEVTAPLSTESTFRNEYPSKDKEDIQMITYLSSKAVTDGRVATTASAPSSHVHALHLELPLTNSLKLPKGSSKKKRSSTSVSSEGTEIQYSVPVKEKCFESLKEKILKNVIEKDKHSEVGAVRVERKGKVEEKSSTTYDFLSGKKKEKEKEKKEKKEKDHKSKQKKKKKKKKKSKQHDYSDYEDSSVEFLDRCSSPLTRSSGSSLTLRSMFSEKNTSYQYPRAILSVDLSGENLSDMEFLDDSSTESLLLSGDEYNQDFDSTILKSLRMKTMLSMKLLDAFVNWMKKMAL.

Tudor domains follow at residues 11 to 71 (ITFE…LERP) and 85 to 141 (VDFK…EDAK). Disordered stretches follow at residues 178–231 (AKNK…TSSD), 289–359 (AEKK…CIKP), 383–411 (SVIN…RSQR), 536–559 (SLKL…EGTE), and 613–651 (LSGK…QHDY). The segment covering 193 to 211 (NKDKEERKWLKVPSKKEET) has biased composition (basic and acidic residues). 2 stretches are compositionally biased toward polar residues: residues 319-340 (DISS…SSGK) and 383-398 (SVIN…NSPR). Residues 399 to 410 (SYKHSQRRRRSQ) are compositionally biased toward basic residues. Residues 614 to 632 (SGKKKEKEKEKKEKKEKDH) are compositionally biased toward basic and acidic residues. Residues 633 to 647 (KSKQKKKKKKKKKSK) are compositionally biased toward basic residues.

The protein localises to the nucleus. Functionally, is a negative regulator of proteasomal degradation of methylated proteins. Involved in the maintainance of pluripotency of embryonic stem cells. This chain is PHD finger protein 20-like protein 1 (PHF20L1), found in Gallus gallus (Chicken).